A 105-amino-acid chain; its full sequence is Nitrogen fixation nifHD region glnB-like protein 1 (105 aa).

Belongs to the P(II) protein family.

Could be involved in the regulation of nitrogen fixation. The sequence is that of Nitrogen fixation nifHD region glnB-like protein 1 (glnBI) from Methanococcus maripaludis (Methanococcus deltae).